The following is a 153-amino-acid chain: Nucleoside diphosphate kinase 3 (153 aa).

The ATP site is built by Lys11, Phe59, Arg87, Thr93, Arg104, and Asn114. The Pros-phosphohistidine intermediate role is filled by His117.

It belongs to the NDK family. In terms of assembly, homohexamer. Requires Mg(2+) as cofactor.

It is found in the plastid. Its subcellular location is the chloroplast thylakoid lumen. It carries out the reaction a 2'-deoxyribonucleoside 5'-diphosphate + ATP = a 2'-deoxyribonucleoside 5'-triphosphate + ADP. The enzyme catalyses a ribonucleoside 5'-diphosphate + ATP = a ribonucleoside 5'-triphosphate + ADP. Functionally, major role in the synthesis of nucleoside triphosphates other than ATP. The ATP gamma phosphate is transferred to the NDP beta phosphate via a ping-pong mechanism, using a phosphorylated active-site intermediate. Shows the highest specificity towards GDP. The polypeptide is Nucleoside diphosphate kinase 3 (Spinacia oleracea (Spinach)).